A 374-amino-acid chain; its full sequence is tRNA-specific 2-thiouridylase MnmA (374 aa).

ATP contacts are provided by residues 12 to 19 (GMSGGVDS) and Met38. The interval 98–100 (NPD) is interaction with target base in tRNA. Residue Cys103 is the Nucleophile of the active site. Cys103 and Cys202 are oxidised to a cystine. ATP is bound at residue Gly128. Residues 152–154 (KDQ) form an interaction with tRNA region. Cys202 functions as the Cysteine persulfide intermediate in the catalytic mechanism. Positions 316–317 (RY) are interaction with tRNA.

The protein belongs to the MnmA/TRMU family.

The protein resides in the cytoplasm. The catalysed reaction is S-sulfanyl-L-cysteinyl-[protein] + uridine(34) in tRNA + AH2 + ATP = 2-thiouridine(34) in tRNA + L-cysteinyl-[protein] + A + AMP + diphosphate + H(+). Its function is as follows. Catalyzes the 2-thiolation of uridine at the wobble position (U34) of tRNA, leading to the formation of s(2)U34. The polypeptide is tRNA-specific 2-thiouridylase MnmA (Vibrio vulnificus (strain CMCP6)).